Consider the following 366-residue polypeptide: MSGNTLGTLFTVTTFGESHGPAIGCVIDGCPPGMSLAEADIQLELDRRKPGTSRHVTQRQEEDKVEILSGVFEGKTTGAPIALLIRNTDQRSKDYGNIADTFRPGHADYTYWQKFGIRDYRGGGRSSARLTAPTVAAGAVAKKWLREKFGTEIRGYMAALGEIDVPFIDWQFVRENPFFVPNADVVPQLEAYMDALRKDGDSIGARINVVASGVPVGLGEPLFDRLDADIAHAMMGINAVKGVEIGAGFASVAQRGSVHGDELTPEGFVGNHAGGVLGGISTGQDITVSIAIKPTSSIRTPRRSIDKNGQPAVVETFGRHDPCVGIRATPIAEAMLALVLIDHALRHRAQCGDVVVGTPKIAASAP.

Residues Arg48 and Arg54 each coordinate NADP(+). FMN-binding positions include 125 to 127, 238 to 239, Gly278, 293 to 297, and Arg319; these read RSS, NA, and KPTSS.

Belongs to the chorismate synthase family. In terms of assembly, homotetramer. Requires FMNH2 as cofactor.

The catalysed reaction is 5-O-(1-carboxyvinyl)-3-phosphoshikimate = chorismate + phosphate. The protein operates within metabolic intermediate biosynthesis; chorismate biosynthesis; chorismate from D-erythrose 4-phosphate and phosphoenolpyruvate: step 7/7. Its function is as follows. Catalyzes the anti-1,4-elimination of the C-3 phosphate and the C-6 proR hydrogen from 5-enolpyruvylshikimate-3-phosphate (EPSP) to yield chorismate, which is the branch point compound that serves as the starting substrate for the three terminal pathways of aromatic amino acid biosynthesis. This reaction introduces a second double bond into the aromatic ring system. The polypeptide is Chorismate synthase (Paraburkholderia phymatum (strain DSM 17167 / CIP 108236 / LMG 21445 / STM815) (Burkholderia phymatum)).